The sequence spans 248 residues: MAGHSKWSQIKRTKAVVDSKRGALFTRLGREIMVAARAGSDPAGNFQLRTAINKARAAAMPASNIDRAIAKGSGQGGEGAQLEDVRYEGYGPGGMAVMVEALTDNRNRTAADLRLAFSKNGGNLGENGCVAYLFEHRSEVSIKTEAGSEERLLESLLDLDADGYELNDETTATIFGPFAGLEALQDGLRQQGWDVKEWGHQWATTTNVSISDPATAQSCLNLLDALESLDDVRSVSANLELDTKLEIN.

Belongs to the TACO1 family.

The protein resides in the cytoplasm. This is Probable transcriptional regulatory protein Syncc9902_0542 from Synechococcus sp. (strain CC9902).